The primary structure comprises 1873 residues: SAGA complex subunit Spt20 (1873 aa).

Belongs to the SPT20 family. In terms of assembly, component of the Spt-Ada-Gcn5 acetyltransferase (SAGA) complex consisting of wda/Taf5L, Saf6, Taf9, Taf10b, Taf12, Ada1, Spt3, Spt7, Spt20, Sf3b3, Sf3b5, Nipped-A/Tra1, a histone acetyltransferase (HAT) module made up of Gcn5, Ada2b (Isoform B), Ada3 and Sgf29, and a deubiquitinase (DUB) module made up of not/nonstop, Sgf11 and e(y)2 tethered to SAGA by Atxn7.

The protein resides in the nucleus. Functionally, component of the transcription regulatory complex SAGA, a multiprotein complex that activates transcription by remodeling chromatin and mediating histone acetylation and deubiquitination. The SAGA complex predominantly acetylates histone H3. In Drosophila melanogaster (Fruit fly), this protein is SAGA complex subunit Spt20.